A 100-amino-acid chain; its full sequence is RxLR effector protein PITG_18683 (100 aa).

The signal sequence occupies residues Met-1 to Ala-22. A RxLR-dEER motif is present at residues Arg-43–Arg-57. Positions Lys-78–Lys-82 match the Calmodulin-binding motif motif.

Belongs to the RxLR effector family. As to quaternary structure, interacts with the host calmodulin.

Its subcellular location is the secreted. The protein localises to the host cell. Secreted effector that associates with calmodulin to interfere with plant defense-associated calcium signaling in hosts. The protein is RxLR effector protein PITG_18683 of Phytophthora infestans (strain T30-4) (Potato late blight agent).